Consider the following 88-residue polypeptide: Small ribosomal subunit protein bS20 (88 aa).

This sequence belongs to the bacterial ribosomal protein bS20 family.

Its function is as follows. Binds directly to 16S ribosomal RNA. This chain is Small ribosomal subunit protein bS20, found in Oenococcus oeni (strain ATCC BAA-331 / PSU-1).